A 329-amino-acid chain; its full sequence is Glycerol-3-phosphate dehydrogenase [NAD(P)+] (329 aa).

Tryptophan 11, arginine 30, and lysine 103 together coordinate NADPH. Residues lysine 103, glycine 132, and serine 134 each coordinate sn-glycerol 3-phosphate. Alanine 136 provides a ligand contact to NADPH. 5 residues coordinate sn-glycerol 3-phosphate: lysine 187, aspartate 240, serine 250, arginine 251, and asparagine 252. Lysine 187 (proton acceptor) is an active-site residue. Arginine 251 contributes to the NADPH binding site. The NADPH site is built by valine 275 and glutamate 277.

This sequence belongs to the NAD-dependent glycerol-3-phosphate dehydrogenase family.

Its subcellular location is the cytoplasm. The enzyme catalyses sn-glycerol 3-phosphate + NAD(+) = dihydroxyacetone phosphate + NADH + H(+). It catalyses the reaction sn-glycerol 3-phosphate + NADP(+) = dihydroxyacetone phosphate + NADPH + H(+). It functions in the pathway membrane lipid metabolism; glycerophospholipid metabolism. In terms of biological role, catalyzes the reduction of the glycolytic intermediate dihydroxyacetone phosphate (DHAP) to sn-glycerol 3-phosphate (G3P), the key precursor for phospholipid synthesis. In Nitrosomonas eutropha (strain DSM 101675 / C91 / Nm57), this protein is Glycerol-3-phosphate dehydrogenase [NAD(P)+].